Consider the following 79-residue polypeptide: Cell division protein ZapB (79 aa).

Residues 4–78 (EVFEKLESKV…LRALLGKMEE (75 aa)) adopt a coiled-coil conformation.

It belongs to the ZapB family. In terms of assembly, homodimer. The ends of the coiled-coil dimer bind to each other, forming polymers. Interacts with FtsZ.

Its subcellular location is the cytoplasm. In terms of biological role, non-essential, abundant cell division factor that is required for proper Z-ring formation. It is recruited early to the divisome by direct interaction with FtsZ, stimulating Z-ring assembly and thereby promoting cell division earlier in the cell cycle. Its recruitment to the Z-ring requires functional FtsA or ZipA. The protein is Cell division protein ZapB of Serratia proteamaculans (strain 568).